The sequence spans 314 residues: Cytosolic sulfotransferase 3 (314 aa).

71–76 (KSGTLW) lines the 3'-phosphoadenylyl sulfate pocket. The Proton acceptor role is filled by His-121. 3'-phosphoadenylyl sulfate contacts are provided by residues Arg-143, Ser-151, Tyr-209, and 275-277 (RKG).

It belongs to the sulfotransferase 1 family.

The protein resides in the cytoplasm. Functionally, sulfotransferase that utilizes 3'-phospho-5'-adenylyl sulfate (PAPS) as sulfonate donor. The sequence is that of Cytosolic sulfotransferase 3 (SOT3) from Arabidopsis thaliana (Mouse-ear cress).